The following is a 466-amino-acid chain: UDP-N-acetylmuramate--L-alanine ligase (466 aa).

An ATP-binding site is contributed by 114–120; it reads GTHGKTT.

Belongs to the MurCDEF family.

It is found in the cytoplasm. The enzyme catalyses UDP-N-acetyl-alpha-D-muramate + L-alanine + ATP = UDP-N-acetyl-alpha-D-muramoyl-L-alanine + ADP + phosphate + H(+). It functions in the pathway cell wall biogenesis; peptidoglycan biosynthesis. In terms of biological role, cell wall formation. This chain is UDP-N-acetylmuramate--L-alanine ligase, found in Mesorhizobium japonicum (strain LMG 29417 / CECT 9101 / MAFF 303099) (Mesorhizobium loti (strain MAFF 303099)).